The following is a 452-amino-acid chain: Coproporphyrinogen III oxidase (452 aa).

Residues 10-15 (GGGISG), 36-37 (EP), 58-61 (GAEA), V242, W390, and 426-428 (IGV) contribute to the FAD site.

It belongs to the protoporphyrinogen/coproporphyrinogen oxidase family. Coproporphyrinogen III oxidase subfamily. FAD serves as cofactor.

The protein resides in the cytoplasm. The catalysed reaction is coproporphyrinogen III + 3 O2 = coproporphyrin III + 3 H2O2. It participates in porphyrin-containing compound metabolism; protoheme biosynthesis. Its function is as follows. Involved in coproporphyrin-dependent heme b biosynthesis. Catalyzes the oxidation of coproporphyrinogen III to coproporphyrin III. The polypeptide is Coproporphyrinogen III oxidase (Mycobacterium bovis (strain ATCC BAA-935 / AF2122/97)).